A 231-amino-acid polypeptide reads, in one-letter code: 7-cyano-7-deazaguanine synthase (231 aa).

8–18 contributes to the ATP binding site; it reads FSGGQDSTTCL. C188, C197, C200, and C203 together coordinate Zn(2+).

Belongs to the QueC family. It depends on Zn(2+) as a cofactor.

The enzyme catalyses 7-carboxy-7-deazaguanine + NH4(+) + ATP = 7-cyano-7-deazaguanine + ADP + phosphate + H2O + H(+). Its pathway is purine metabolism; 7-cyano-7-deazaguanine biosynthesis. Its function is as follows. Catalyzes the ATP-dependent conversion of 7-carboxy-7-deazaguanine (CDG) to 7-cyano-7-deazaguanine (preQ(0)). The sequence is that of 7-cyano-7-deazaguanine synthase from Salmonella schwarzengrund (strain CVM19633).